A 67-amino-acid chain; its full sequence is MPQLDTSTWFINIVSMILTLFIVFQLKISKHSYPMHPEAKTTKMAKRLTPWESKWTKIYSPLSLPQQ.

Residues 8-24 traverse the membrane as a helical segment; sequence TWFINIVSMILTLFIVF. K54 carries the N6-acetyllysine; alternate modification. Residue K54 is modified to N6-succinyllysine; alternate. K57 is subject to N6-acetyllysine.

Belongs to the ATPase protein 8 family. Component of the ATP synthase complex composed at least of ATP5F1A/subunit alpha, ATP5F1B/subunit beta, ATP5MC1/subunit c (homooctomer), MT-ATP6/subunit a, MT-ATP8/subunit 8, ATP5ME/subunit e, ATP5MF/subunit f, ATP5MG/subunit g, ATP5MK/subunit k, ATP5MJ/subunit j, ATP5F1C/subunit gamma, ATP5F1D/subunit delta, ATP5F1E/subunit epsilon, ATP5PF/subunit F6, ATP5PB/subunit b, ATP5PD/subunit d, ATP5PO/subunit OSCP. ATP synthase complex consists of a soluble F(1) head domain (subunits alpha(3) and beta(3)) - the catalytic core - and a membrane F(0) domain - the membrane proton channel (subunits c, a, 8, e, f, g, k and j). These two domains are linked by a central stalk (subunits gamma, delta, and epsilon) rotating inside the F1 region and a stationary peripheral stalk (subunits F6, b, d, and OSCP). Interacts with PRICKLE3.

The protein resides in the mitochondrion membrane. In terms of biological role, subunit 8, of the mitochondrial membrane ATP synthase complex (F(1)F(0) ATP synthase or Complex V) that produces ATP from ADP in the presence of a proton gradient across the membrane which is generated by electron transport complexes of the respiratory chain. ATP synthase complex consist of a soluble F(1) head domain - the catalytic core - and a membrane F(1) domain - the membrane proton channel. These two domains are linked by a central stalk rotating inside the F(1) region and a stationary peripheral stalk. During catalysis, ATP synthesis in the catalytic domain of F(1) is coupled via a rotary mechanism of the central stalk subunits to proton translocation. In vivo, can only synthesize ATP although its ATP hydrolase activity can be activated artificially in vitro. Part of the complex F(0) domain. The polypeptide is ATP synthase F(0) complex subunit 8 (Equus asinus (Donkey)).